Here is a 67-residue protein sequence, read N- to C-terminus: Large ribosomal subunit protein bL35 (67 aa).

The tract at residues 1–41 (MPKMKTHRGAAKRFKKTGTGKLKRSHAYTSHMFRHKSQKQK) is disordered.

This sequence belongs to the bacterial ribosomal protein bL35 family.

The protein is Large ribosomal subunit protein bL35 of Shouchella clausii (strain KSM-K16) (Alkalihalobacillus clausii).